A 238-amino-acid chain; its full sequence is RxLR effector protein PITG_14788 (238 aa).

The N-terminal stretch at 1–23 (MKSLHAVNLVLLLLLACFAPAPA) is a signal peptide. The RxLR-dEER signature appears at 47–65 (RLLRAHSSGKEEQKEEEER).

The protein belongs to the RxLR effector family.

It is found in the secreted. The protein localises to the host cytoplasm. Its subcellular location is the host cytoskeleton. It localises to the host nucleus. The protein resides in the host nucleolus. Its function is as follows. Effector that enhances P.infestans colonization of Nicotiana benthamiana leaves. The polypeptide is RxLR effector protein PITG_14788 (Phytophthora infestans (strain T30-4) (Potato late blight agent)).